The primary structure comprises 534 residues: Phenylalanine N-monooxygenase CYP79D16 (534 aa).

An N-terminal signal peptide occupies residues 1 to 21 (MEANVGFLTLCLAITLVRFLM). C472 is a binding site for heme. A glycan (N-linked (GlcNAc...) asparagine) is linked at N500.

The protein belongs to the cytochrome P450 family. Requires heme as cofactor. In terms of tissue distribution, expressed in seedlings.

It carries out the reaction L-phenylalanine + 2 reduced [NADPH--hemoprotein reductase] + 2 O2 = (E)-phenylacetaldehyde oxime + 2 oxidized [NADPH--hemoprotein reductase] + CO2 + 3 H2O + 2 H(+). In terms of biological role, involved in L-phenylalanine-derived cyanogenic glycoside biosynthesis, including prunasin and amygdalin defensive agents. Catalyzes the conversion of L-phenylalanine (Phe) into phenylacetaldoxime (PAOx). Cannot use tyrosine (Tyr), tryptophan (Trp) and valine (Val) as substrates. This chain is Phenylalanine N-monooxygenase CYP79D16, found in Prunus mume (Japanese apricot).